We begin with the raw amino-acid sequence, 319 residues long: Telomere-binding protein cav (319 aa).

Residues 107–312 (RRKMVQPYPE…SISFQNSGSE (206 aa)) form a required for binding to Su(var)205 region. 2 disordered regions span residues 141-163 (WQKQ…DNEV) and 186-248 (PSDL…PDYY). Short sequence motifs (su(var)205-binding Pro-containing repeat) lie at residues 220 to 224 (PETQM) and 273 to 279 (PETEMNE). Residues 291–311 (SMSIGPSINSDGSISFQNSGS) are compositionally biased toward polar residues. A disordered region spans residues 291-319 (SMSIGPSINSDGSISFQNSGSEPIDVDVN).

Interacts (via C-terminus) with Su(var)205 dimer (via hinge and chromoshadow domain) and with moi to form the terminin, telomere-capping, complex. Interacts with HP6, which is also part of the terminin complex.

The protein resides in the nucleus. It localises to the chromosome. The protein localises to the telomere. In terms of biological role, binds to chromosome ends in a sequence-dependent manner and is required for telomere capping. The sequence is that of Telomere-binding protein cav from Drosophila yakuba (Fruit fly).